We begin with the raw amino-acid sequence, 125 residues long: Large ribosomal subunit protein bL21 (125 aa).

This sequence belongs to the bacterial ribosomal protein bL21 family. As to quaternary structure, part of the 50S ribosomal subunit. Contacts protein L20.

Functionally, this protein binds to 23S rRNA in the presence of protein L20. The sequence is that of Large ribosomal subunit protein bL21 from Synechococcus sp. (strain CC9311).